The sequence spans 226 residues: Glyceraldehyde 3-phosphate phosphatase (226 aa).

The protein belongs to the HAD-like hydrolase superfamily. The cofactor is Mg(2+).

Catalyzes the dephosphorylation of D,L-glyceraldehyde 3-phosphate in vitro. In Methanothermobacter thermautotrophicus (strain ATCC 29096 / DSM 1053 / JCM 10044 / NBRC 100330 / Delta H) (Methanobacterium thermoautotrophicum), this protein is Glyceraldehyde 3-phosphate phosphatase.